A 557-amino-acid polypeptide reads, in one-letter code: MSYNRRSKNITQGVARSPNRSMYYALGYQKEDFDKPMIGIANGHSTITPCNAGLQRLSDAAVAAVKDAGANPQIFGTPTISDGMSMGTEGMKYSLVSREVIADCIETCVQGQWMDGVVVVGGCDKNMPGGMIALARINVPGIYVYGGTIRPGHWKGHDLTIVSSFEAVGEFTAGRMSQEDFEGVEKNACPTTGSCGGMYTANTMSSSFEALGMSLLYSSTMANPDQEKVDSAAESARVLVEAVKKDLKPRDIITKQSIENAVSVIMATGGSTNAVLHYLAIAHAAEIDWSIEDFERIRKRVPVICDLKPSGQYVATDLHAAGGIPQVMKLLLDAGLLHGDCMTITGRTLAEELKDVPSVPRADQKVIHPIDQALYKEGHLAILKGNLAEDGAVAKITGLKNPVITGPARVFDDEQSALAAILDDRIRAGDVVVLRYLGPQGGPGMPEMLAPTSAIIGKGLGESVGLITDGRFSGGTWGMVVGHVAPEAFVGGTIALVQEGDSITIDAHKLLLQLNVDDAELARRRVAWKQPAPRYTRGVLAKYAALARPANQGAVTG.

Residue C50 coordinates [2Fe-2S] cluster. D82 lines the Mg(2+) pocket. Residue C123 coordinates [2Fe-2S] cluster. 2 residues coordinate Mg(2+): D124 and K125. Residue K125 is modified to N6-carboxylysine. Position 195 (C195) interacts with [2Fe-2S] cluster. A Mg(2+)-binding site is contributed by E447. The active-site Proton acceptor is S473.

It belongs to the IlvD/Edd family. In terms of assembly, homodimer. [2Fe-2S] cluster is required as a cofactor. It depends on Mg(2+) as a cofactor.

It catalyses the reaction (2R)-2,3-dihydroxy-3-methylbutanoate = 3-methyl-2-oxobutanoate + H2O. The enzyme catalyses (2R,3R)-2,3-dihydroxy-3-methylpentanoate = (S)-3-methyl-2-oxopentanoate + H2O. Its pathway is amino-acid biosynthesis; L-isoleucine biosynthesis; L-isoleucine from 2-oxobutanoate: step 3/4. It functions in the pathway amino-acid biosynthesis; L-valine biosynthesis; L-valine from pyruvate: step 3/4. Its function is as follows. Functions in the biosynthesis of branched-chain amino acids. Catalyzes the dehydration of (2R,3R)-2,3-dihydroxy-3-methylpentanoate (2,3-dihydroxy-3-methylvalerate) into 2-oxo-3-methylpentanoate (2-oxo-3-methylvalerate) and of (2R)-2,3-dihydroxy-3-methylbutanoate (2,3-dihydroxyisovalerate) into 2-oxo-3-methylbutanoate (2-oxoisovalerate), the penultimate precursor to L-isoleucine and L-valine, respectively. This chain is Dihydroxy-acid dehydratase, found in Burkholderia pseudomallei (strain 1710b).